A 312-amino-acid polypeptide reads, in one-letter code: DNA-directed RNA polymerase subunit alpha (312 aa).

An alpha N-terminal domain (alpha-NTD) region spans residues 1 to 229 (MLQYQIDRID…ELFQPLATVT (229 aa)). The alpha C-terminal domain (alpha-CTD) stretch occupies residues 246–312 (IPLEELNLSV…ISIPQSRTSV (67 aa)).

The protein belongs to the RNA polymerase alpha chain family. As to quaternary structure, in cyanobacteria the RNAP catalytic core is composed of 2 alpha, 1 beta, 1 beta', 1 gamma and 1 omega subunit. When a sigma factor is associated with the core the holoenzyme is formed, which can initiate transcription.

The enzyme catalyses RNA(n) + a ribonucleoside 5'-triphosphate = RNA(n+1) + diphosphate. DNA-dependent RNA polymerase catalyzes the transcription of DNA into RNA using the four ribonucleoside triphosphates as substrates. This is DNA-directed RNA polymerase subunit alpha from Prochlorococcus marinus subsp. pastoris (strain CCMP1986 / NIES-2087 / MED4).